The chain runs to 616 residues: Sialic acid TRAP transporter permease protein SiaT (616 aa).

The interval 1-190 (MKYINKLEEW…RISNYIKLGS (190 aa)) is TRAP transporter small permease. 17 consecutive transmembrane segments (helical) span residues 9-29 (EWLG…QILS), 36-56 (PLIW…MLGI), 83-103 (TNTF…HFGI), 117-137 (GGIS…LMMF), 153-173 (YLPA…LFFA), 195-215 (IALL…WSLF), 244-264 (FPLL…TGGI), 288-308 (IGAS…AGGL), 332-352 (ASCI…YGVI), 357-377 (IAKL…ALMA), 407-427 (FWAI…LFSP), 431-451 (AIVA…ELTL), 459-479 (IEAM…TFFG), 505-525 (VLVM…ALAL), 527-547 (FLVL…LIFF), 552-572 (TLNM…FVVA), and 587-607 (LPFL…PQII). Residues 191 to 616 (SSVYIALLVW…ITFVPNLLIP (426 aa)) are TRAP transporter large permease.

In the N-terminal section; belongs to the TRAP transporter small permease family. This sequence in the C-terminal section; belongs to the TRAP transporter large permease family. The complex comprises the extracytoplasmic solute receptor protein SiaP, and the fused transmembrane protein SiaT.

It is found in the cell inner membrane. Part of the tripartite ATP-independent periplasmic (TRAP) transport system SiaPT involved in the uptake of sialic acid. The protein is Sialic acid TRAP transporter permease protein SiaT (siaT) of Haemophilus influenzae (strain 86-028NP).